The primary structure comprises 942 residues: Protein inturned (942 aa).

Basic and acidic residues predominate over residues 1 to 13; sequence MADPARRDPRGRA. Disordered regions lie at residues 1-54 and 129-150; these read MADP…LEPE and PKRH…KHQS. Over residues 22–32 the composition is skewed to acidic residues; that stretch reads SQEEEEEESDS. Residues 33 to 48 show a composition bias toward low complexity; the sequence is DAGASSLGSCSSASSD. Residues 138–150 show a composition bias toward polar residues; sequence SNTGPVSILKHQS. Residues 189-267 enclose the PDZ domain; it reads LVGVIHQTKW…PMQVKLTFEN (79 aa). Phosphoserine occurs at positions 674 and 678. Residues 707-752 form a disordered region; the sequence is KARKPSPSRIGGGREPGEGEENVGLSPHTTPDTVRKQRESEGSDDN.

This sequence belongs to the inturned family. In terms of assembly, component of the CPLANE (ciliogenesis and planar polarity effectors) complex, composed of INTU, FUZ and WDPCP. Interacts with CPLANE1. Interacts with NPHP4 and DAAM1; INTU is mediating the interaction between NPHP4 and DAAM1.

It localises to the cytoplasm. The protein localises to the cell surface. It is found in the cytoskeleton. The protein resides in the cilium basal body. Its subcellular location is the microtubule organizing center. It localises to the centrosome. The protein localises to the centriole. In terms of biological role, plays a key role in ciliogenesis and embryonic development. Regulator of cilia formation by controlling the organization of the apical actin cytoskeleton and the positioning of the basal bodies at the apical cell surface, which in turn is essential for the normal orientation of elongating ciliary microtubules. Plays a key role in definition of cell polarity via its role in ciliogenesis but not via conversion extension. Has an indirect effect on hedgehog signaling. Proposed to function as core component of the CPLANE (ciliogenesis and planar polarity effectors) complex involved in the recruitment of peripheral IFT-A proteins to basal bodies. Required for recruitment of CPLANE2 to the mother centriole. Binds phosphatidylinositol 3-phosphate with highest affinity, followed by phosphatidylinositol 4-phosphate and phosphatidylinositol 5-phosphate. In Rattus norvegicus (Rat), this protein is Protein inturned (Intu).